We begin with the raw amino-acid sequence, 331 residues long: L-lactate dehydrogenase A chain (331 aa).

Residues 29–57 and R98 each bind NAD(+); that span reads GMVG…MEDK. Substrate is bound by residues R105, N137, and R168. N137 provides a ligand contact to NAD(+). Residue H192 is the Proton acceptor of the active site. T247 lines the substrate pocket.

Belongs to the LDH/MDH superfamily. LDH family. Homotetramer.

It is found in the cytoplasm. It catalyses the reaction (S)-lactate + NAD(+) = pyruvate + NADH + H(+). The protein operates within fermentation; pyruvate fermentation to lactate; (S)-lactate from pyruvate: step 1/1. Interconverts simultaneously and stereospecifically pyruvate and lactate with concomitant interconversion of NADH and NAD(+). This Patagonotothen tessellata (Black southern cod) protein is L-lactate dehydrogenase A chain (ldha).